Reading from the N-terminus, the 78-residue chain is Large ribosomal subunit protein bL28 (78 aa).

This sequence belongs to the bacterial ribosomal protein bL28 family.

This chain is Large ribosomal subunit protein bL28, found in Bordetella avium (strain 197N).